Consider the following 63-residue polypeptide: Large ribosomal subunit protein bL35 (63 aa).

This sequence belongs to the bacterial ribosomal protein bL35 family.

The protein is Large ribosomal subunit protein bL35 of Campylobacter hominis (strain ATCC BAA-381 / DSM 21671 / CCUG 45161 / LMG 19568 / NCTC 13146 / CH001A).